A 121-amino-acid chain; its full sequence is Large ribosomal subunit protein uL14 (121 aa).

The protein belongs to the universal ribosomal protein uL14 family. As to quaternary structure, part of the 50S ribosomal subunit. Forms a cluster with proteins L3 and L19. In the 70S ribosome, L14 and L19 interact and together make contacts with the 16S rRNA in bridges B5 and B8.

Its function is as follows. Binds to 23S rRNA. Forms part of two intersubunit bridges in the 70S ribosome. In Mycoplasmopsis synoviae (strain 53) (Mycoplasma synoviae), this protein is Large ribosomal subunit protein uL14.